A 661-amino-acid polypeptide reads, in one-letter code: UvrABC system protein B (661 aa).

The Helicase ATP-binding domain occupies 26-413; it reads KGIQEGKKHQ…TDEMVEQIIR (388 aa). 39–46 lines the ATP pocket; the sequence is GATGTGKT. The Beta-hairpin signature appears at 92 to 115; that stretch reads YYDYYQPEAYVPQTDTFIEKDASI. Residues 430-596 form the Helicase C-terminal domain; it reads QIDDLIGEIQ…TINKEIRDVI (167 aa). In terms of domain architecture, UVR spans 625–660; it reads QKVVEQMEHEMKEAAKALDFERAAELRDLLLELKAE.

This sequence belongs to the UvrB family. Forms a heterotetramer with UvrA during the search for lesions. Interacts with UvrC in an incision complex.

It is found in the cytoplasm. In terms of biological role, the UvrABC repair system catalyzes the recognition and processing of DNA lesions. A damage recognition complex composed of 2 UvrA and 2 UvrB subunits scans DNA for abnormalities. Upon binding of the UvrA(2)B(2) complex to a putative damaged site, the DNA wraps around one UvrB monomer. DNA wrap is dependent on ATP binding by UvrB and probably causes local melting of the DNA helix, facilitating insertion of UvrB beta-hairpin between the DNA strands. Then UvrB probes one DNA strand for the presence of a lesion. If a lesion is found the UvrA subunits dissociate and the UvrB-DNA preincision complex is formed. This complex is subsequently bound by UvrC and the second UvrB is released. If no lesion is found, the DNA wraps around the other UvrB subunit that will check the other stand for damage. The protein is UvrABC system protein B of Bacillus subtilis (strain 168).